Consider the following 255-residue polypeptide: 5-oxoprolinase subunit A (255 aa).

Belongs to the LamB/PxpA family. As to quaternary structure, forms a complex composed of PxpA, PxpB and PxpC.

The catalysed reaction is 5-oxo-L-proline + ATP + 2 H2O = L-glutamate + ADP + phosphate + H(+). Its function is as follows. Catalyzes the cleavage of 5-oxoproline to form L-glutamate coupled to the hydrolysis of ATP to ADP and inorganic phosphate. This is 5-oxoprolinase subunit A from Pyrococcus furiosus (strain ATCC 43587 / DSM 3638 / JCM 8422 / Vc1).